A 139-amino-acid polypeptide reads, in one-letter code: Aspartate 1-decarboxylase (139 aa).

The active-site Schiff-base intermediate with substrate; via pyruvic acid is the Ser-25. At Ser-25 the chain carries Pyruvic acid (Ser). Residue Thr-57 coordinates substrate. The active-site Proton donor is the Tyr-58. Position 73–75 (73–75 (GAA)) interacts with substrate. The disordered stretch occupies residues 116 to 139 (ELGEDPAHAPAGSGLKDPRHPEGE).

The protein belongs to the PanD family. As to quaternary structure, heterooctamer of four alpha and four beta subunits. The cofactor is pyruvate. In terms of processing, is synthesized initially as an inactive proenzyme, which is activated by self-cleavage at a specific serine bond to produce a beta-subunit with a hydroxyl group at its C-terminus and an alpha-subunit with a pyruvoyl group at its N-terminus.

The protein resides in the cytoplasm. The catalysed reaction is L-aspartate + H(+) = beta-alanine + CO2. It functions in the pathway cofactor biosynthesis; (R)-pantothenate biosynthesis; beta-alanine from L-aspartate: step 1/1. In terms of biological role, catalyzes the pyruvoyl-dependent decarboxylation of aspartate to produce beta-alanine. The sequence is that of Aspartate 1-decarboxylase from Corynebacterium urealyticum (strain ATCC 43042 / DSM 7109).